Reading from the N-terminus, the 165-residue chain is Nuclear cap-binding protein subunit 2 (165 aa).

Residues tyrosine 19, tyrosine 42, 111 to 115 (RADWD), 122 to 126 (RQYGR), and 132 to 133 (QV) each bind mRNA. The RRM domain occupies 39–117 (HTLYVGNLSF…RIIRADWDAG (79 aa)). Positions 144 to 165 (ARGGYGKLAQQHRPTEAIRNTF) are disordered.

This sequence belongs to the RRM NCBP2 family. Component of the nuclear cap-binding complex (CBC), a heterodimer composed of ncbp1/cbp80 and ncbp2/cbp20 that interacts with m7GpppG-capped RNA.

Its subcellular location is the nucleus. The protein resides in the cytoplasm. In terms of biological role, component of the cap-binding complex (CBC), which binds co-transcriptionally to the 5' cap of pre-mRNAs and is involved in various processes such as pre-mRNA splicing, translation regulation, nonsense-mediated mRNA decay, RNA-mediated gene silencing (RNAi) by microRNAs (miRNAs) and mRNA export. The CBC complex is involved in mRNA export from the nucleus, leading to the recruitment of the mRNA export machinery to the 5' end of mRNA and to mRNA export in a 5' to 3' direction through the nuclear pore. The CBC complex is also involved in mediating U snRNA and intronless mRNAs export from the nucleus. The CBC complex is essential for a pioneer round of mRNA translation, before steady state translation when the CBC complex is replaced by cytoplasmic cap-binding protein eIF4E. The pioneer round of mRNA translation mediated by the CBC complex plays a central role in nonsense-mediated mRNA decay (NMD), NMD only taking place in mRNAs bound to the CBC complex, but not on eIF4E-bound mRNAs. The CBC complex enhances NMD in mRNAs containing at least one exon-junction complex (EJC), promoting the interaction between upf1 and upf2. The CBC complex is also involved in 'failsafe' NMD, which is independent of the EJC complex, while it does not participate in Staufen-mediated mRNA decay (SMD). During cell proliferation, the CBC complex is also involved in microRNAs (miRNAs) biogenesis via its interaction with srrt/ars2, thereby being required for miRNA-mediated RNA interference. The CBC complex also acts as a negative regulator of parn, thereby acting as an inhibitor of mRNA deadenylation. In the CBC complex, ncbp2/cbp20 recognizes and binds capped RNAs (m7GpppG-capped RNA) but requires ncbp1/cbp80 to stabilize the movement of its N-terminal loop and lock the CBC into a high affinity cap-binding state with the cap structure. The conventional cap-binding complex with NCBP2 binds both small nuclear RNA (snRNA) and messenger (mRNA) and is involved in their export from the nucleus. The protein is Nuclear cap-binding protein subunit 2 (ncbp2) of Siniperca chuatsi (Mandarin fish).